We begin with the raw amino-acid sequence, 107 residues long: uncharacterized protein (107 aa).

The chain crosses the membrane as a helical span at residues 9–31 (AAAIITAPTILAMMSTVLRALIF).

The protein resides in the membrane. This is an uncharacterized protein from Archaeoglobus fulgidus (strain ATCC 49558 / DSM 4304 / JCM 9628 / NBRC 100126 / VC-16).